A 456-amino-acid polypeptide reads, in one-letter code: Nitrogenase molybdenum-iron protein beta chain (456 aa).

The [8Fe-7S] cluster site is built by Cys23, Cys48, Cys106, and Ser141.

Belongs to the NifD/NifK/NifE/NifN family. Tetramer of two alpha and two beta chains. Forms complex with the iron protein (nitrogenase component 2). [8Fe-7S] cluster is required as a cofactor.

It catalyses the reaction N2 + 8 reduced [2Fe-2S]-[ferredoxin] + 16 ATP + 16 H2O = H2 + 8 oxidized [2Fe-2S]-[ferredoxin] + 2 NH4(+) + 16 ADP + 16 phosphate + 6 H(+). This molybdenum-iron protein is part of the nitrogenase complex that catalyzes the key enzymatic reactions in nitrogen fixation. This is Nitrogenase molybdenum-iron protein beta chain (nifK2) from Methanosarcina barkeri.